The chain runs to 156 residues: Ribosomal RNA large subunit methyltransferase H (156 aa).

S-adenosyl-L-methionine is bound by residues L73, G104, and 123-128; that span reads LSALTL.

It belongs to the RNA methyltransferase RlmH family. As to quaternary structure, homodimer.

It localises to the cytoplasm. It carries out the reaction pseudouridine(1915) in 23S rRNA + S-adenosyl-L-methionine = N(3)-methylpseudouridine(1915) in 23S rRNA + S-adenosyl-L-homocysteine + H(+). Specifically methylates the pseudouridine at position 1915 (m3Psi1915) in 23S rRNA. This Vibrio parahaemolyticus serotype O3:K6 (strain RIMD 2210633) protein is Ribosomal RNA large subunit methyltransferase H.